The following is a 296-amino-acid chain: Protoheme IX farnesyltransferase (296 aa).

Transmembrane regions (helical) follow at residues 11–31 (PGIIFGNLISVIGGFLLAAQG), 35–55 (YPLFLATLVGVSLVVASGCVF), 84–104 (VTLVYASLLGIAGFALLYVAA), 107–127 (LAMWLAVMGFVVYVGVYSLYM), 132–152 (VYGTLIGSLSGAAPPVIGYCA), 162–182 (LILLLIFSLWQMPHSYAIAIF), 208–228 (ITLYIVAFAIATLMLSLGGYA), 229–249 (GYKYLIVAAAVSVWWLGMALS), and 264–284 (LFVFSIVAITSLSVMMSVDSM).

Belongs to the UbiA prenyltransferase family. Protoheme IX farnesyltransferase subfamily.

The protein localises to the cell inner membrane. It catalyses the reaction heme b + (2E,6E)-farnesyl diphosphate + H2O = Fe(II)-heme o + diphosphate. It functions in the pathway porphyrin-containing compound metabolism; heme O biosynthesis; heme O from protoheme: step 1/1. Functionally, converts heme B (protoheme IX) to heme O by substitution of the vinyl group on carbon 2 of heme B porphyrin ring with a hydroxyethyl farnesyl side group. The sequence is that of Protoheme IX farnesyltransferase from Pectobacterium atrosepticum (strain SCRI 1043 / ATCC BAA-672) (Erwinia carotovora subsp. atroseptica).